The sequence spans 159 residues: Phosphopantetheine adenylyltransferase (159 aa).

A substrate-binding site is contributed by Ser9. ATP is bound by residues 9 to 10 (SF) and His17. Residues Lys41, Leu74, and Lys88 each coordinate substrate. Residues 89–91 (GLR), Glu99, and 123–129 (YGYISST) contribute to the ATP site.

It belongs to the bacterial CoaD family. In terms of assembly, homohexamer. Requires Mg(2+) as cofactor.

Its subcellular location is the cytoplasm. The catalysed reaction is (R)-4'-phosphopantetheine + ATP + H(+) = 3'-dephospho-CoA + diphosphate. Its pathway is cofactor biosynthesis; coenzyme A biosynthesis; CoA from (R)-pantothenate: step 4/5. Reversibly transfers an adenylyl group from ATP to 4'-phosphopantetheine, yielding dephospho-CoA (dPCoA) and pyrophosphate. The sequence is that of Phosphopantetheine adenylyltransferase from Corynebacterium diphtheriae (strain ATCC 700971 / NCTC 13129 / Biotype gravis).